We begin with the raw amino-acid sequence, 368 residues long: Germination protease (368 aa).

Residues 1 to 16 constitute a propeptide that is removed on maturation; that stretch reads MKNNELDVNQFLIRTD.

This sequence belongs to the peptidase A25 family. In terms of assembly, homotetramer. In terms of processing, autoproteolytically processed. The inactive tetrameric zymogen termed p46 autoprocesses to a smaller form termed p41, which is active only during spore germination.

It catalyses the reaction Endopeptidase action with P4 Glu or Asp, P1 preferably Glu &gt; Asp, P1' hydrophobic and P2' Ala.. In terms of biological role, initiates the rapid degradation of small, acid-soluble proteins during spore germination. The sequence is that of Germination protease from Bacillus velezensis (strain DSM 23117 / BGSC 10A6 / LMG 26770 / FZB42) (Bacillus amyloliquefaciens subsp. plantarum).